A 223-amino-acid chain; its full sequence is Nicotinamide/nicotinic acid mononucleotide adenylyltransferase 2 (223 aa).

NAD(+)-binding residues include Ser-11 and Phe-12. His-19 is an ATP binding site. Trp-87, Thr-90, Gly-116, Asp-118, Leu-133, Trp-134, and Arg-153 together coordinate NAD(+). 190–191 contacts ATP; sequence TR.

This sequence belongs to the eukaryotic NMN adenylyltransferase family. A divalent metal cation is required as a cofactor.

The enzyme catalyses beta-nicotinamide D-ribonucleotide + ATP + H(+) = diphosphate + NAD(+). It catalyses the reaction nicotinate beta-D-ribonucleotide + ATP + H(+) = deamido-NAD(+) + diphosphate. The protein operates within cofactor biosynthesis; NAD(+) biosynthesis; deamido-NAD(+) from nicotinate D-ribonucleotide: step 1/1. It participates in cofactor biosynthesis; NAD(+) biosynthesis; NAD(+) from nicotinamide D-ribonucleotide: step 1/1. Catalyzes the formation of NAD(+) from nicotinamide mononucleotide (NMN) and ATP. Can also use the deamidated form; nicotinic acid mononucleotide (NaMN) as substrate. This Caenorhabditis elegans protein is Nicotinamide/nicotinic acid mononucleotide adenylyltransferase 2.